The sequence spans 224 residues: Deoxyribose-phosphate aldolase (224 aa).

Catalysis depends on Asp92, which acts as the Proton donor/acceptor. Lys155 serves as the catalytic Schiff-base intermediate with acetaldehyde. The active-site Proton donor/acceptor is Lys184.

It belongs to the DeoC/FbaB aldolase family. DeoC type 1 subfamily.

The protein resides in the cytoplasm. It carries out the reaction 2-deoxy-D-ribose 5-phosphate = D-glyceraldehyde 3-phosphate + acetaldehyde. It participates in carbohydrate degradation; 2-deoxy-D-ribose 1-phosphate degradation; D-glyceraldehyde 3-phosphate and acetaldehyde from 2-deoxy-alpha-D-ribose 1-phosphate: step 2/2. Functionally, catalyzes a reversible aldol reaction between acetaldehyde and D-glyceraldehyde 3-phosphate to generate 2-deoxy-D-ribose 5-phosphate. The protein is Deoxyribose-phosphate aldolase of Clostridium perfringens (strain SM101 / Type A).